The following is a 205-amino-acid chain: Deoxyuridine 5'-triphosphate nucleotidohydrolase (205 aa).

Phosphoserine is present on serine 54. Substrate is bound by residues 126–128, 140–143, glycine 151, and 199–200; these read RSG, GVID, and FG.

This sequence belongs to the dUTPase family. Homotrimer. It depends on Mg(2+) as a cofactor. As to expression, expressed in all tissues examined. Higher levels in heart and kidney.

The protein localises to the cytoplasm. Its subcellular location is the nucleus. It catalyses the reaction dUTP + H2O = dUMP + diphosphate + H(+). Its pathway is pyrimidine metabolism; dUMP biosynthesis; dUMP from dCTP (dUTP route): step 2/2. Its function is as follows. Catalyzes the cleavage of 2'-deoxyuridine 5'-triphosphate (dUTP) into 2'-deoxyuridine 5'-monophosphate (dUMP) and inorganic pyrophosphate and through its action efficiently prevents uracil misincorporation into DNA and at the same time provides dUMP, the substrate for de novo thymidylate biosynthesis. Inhibits peroxisome proliferator-activated receptor (PPAR) activity by binding of its N-terminal to PPAR, preventing the latter's dimerization with retinoid X receptor. Essential for embryonic development. In Rattus norvegicus (Rat), this protein is Deoxyuridine 5'-triphosphate nucleotidohydrolase (Dut).